We begin with the raw amino-acid sequence, 281 residues long: MVLSCELTLKELLESGAHFGHQTSRWNPKMKPFIFEEKNGLYIIDLAKTLAQLKKAVSCIQKTVEQGKSILFVGTKKQAKQIIKEAAIECGEFFASERWLGGMLTNMATIRNSVKTLNNIEIDLASSNSVLTKKETALLAKRHRKLLNNLEGVRHMNSLPGLLVVIDPGYERIAVAEAGKLGIPVMALVDTNCDPTPINHVIPCNDDSIKSIRLIVNALKDAIIDTKKRSGFEILSPVRPIERPAEEIVEGLPLPNEAQNDANSKEGFLVWTDTDNSEALR.

The protein belongs to the universal ribosomal protein uS2 family.

The chain is Small ribosomal subunit protein uS2 (rpsB) from Chlamydia muridarum (strain MoPn / Nigg).